Consider the following 471-residue polypeptide: Glutamate--tRNA ligase (471 aa).

Residues Pro9 to Gly19 carry the 'HIGH' region motif. Zn(2+) contacts are provided by Cys98, Cys100, Cys125, and Asp127. Residues Lys237 to Arg241 carry the 'KMSKS' region motif. Lys240 is an ATP binding site.

This sequence belongs to the class-I aminoacyl-tRNA synthetase family. Glutamate--tRNA ligase type 1 subfamily. In terms of assembly, monomer. The cofactor is Zn(2+).

Its subcellular location is the cytoplasm. It catalyses the reaction tRNA(Glu) + L-glutamate + ATP = L-glutamyl-tRNA(Glu) + AMP + diphosphate. Catalyzes the attachment of glutamate to tRNA(Glu) in a two-step reaction: glutamate is first activated by ATP to form Glu-AMP and then transferred to the acceptor end of tRNA(Glu). This Aeromonas hydrophila subsp. hydrophila (strain ATCC 7966 / DSM 30187 / BCRC 13018 / CCUG 14551 / JCM 1027 / KCTC 2358 / NCIMB 9240 / NCTC 8049) protein is Glutamate--tRNA ligase.